A 471-amino-acid chain; its full sequence is Ribosomal protein uS12 methylthiotransferase RimO (471 aa).

The MTTase N-terminal domain maps to 19–134 (PRVGFVSLGC…VMNAVHTHLP (116 aa)). Residues cysteine 28, cysteine 64, cysteine 93, cysteine 169, cysteine 173, and cysteine 176 each contribute to the [4Fe-4S] cluster site. A Radical SAM core domain is found at 155–396 (LTPRHYAYLK…MAVAEEVSTA (242 aa)). Residues 399–471 (QKRVGQTMQV…QGHDLVGQPV (73 aa)) enclose the TRAM domain.

Belongs to the methylthiotransferase family. RimO subfamily. The cofactor is [4Fe-4S] cluster.

It localises to the cytoplasm. It catalyses the reaction L-aspartate(89)-[ribosomal protein uS12]-hydrogen + (sulfur carrier)-SH + AH2 + 2 S-adenosyl-L-methionine = 3-methylsulfanyl-L-aspartate(89)-[ribosomal protein uS12]-hydrogen + (sulfur carrier)-H + 5'-deoxyadenosine + L-methionine + A + S-adenosyl-L-homocysteine + 2 H(+). Functionally, catalyzes the methylthiolation of an aspartic acid residue of ribosomal protein uS12. This chain is Ribosomal protein uS12 methylthiotransferase RimO, found in Delftia acidovorans (strain DSM 14801 / SPH-1).